The chain runs to 66 residues: Large ribosomal subunit protein uL29 (66 aa).

The protein belongs to the universal ribosomal protein uL29 family.

This is Large ribosomal subunit protein uL29 from Bacillus licheniformis (strain ATCC 14580 / DSM 13 / JCM 2505 / CCUG 7422 / NBRC 12200 / NCIMB 9375 / NCTC 10341 / NRRL NRS-1264 / Gibson 46).